The sequence spans 303 residues: Elongation factor Ts (303 aa).

An involved in Mg(2+) ion dislocation from EF-Tu region spans residues 81–84; sequence TDFV.

This sequence belongs to the EF-Ts family.

The protein localises to the cytoplasm. Its function is as follows. Associates with the EF-Tu.GDP complex and induces the exchange of GDP to GTP. It remains bound to the aminoacyl-tRNA.EF-Tu.GTP complex up to the GTP hydrolysis stage on the ribosome. In Mesomycoplasma hyopneumoniae (strain 7448) (Mycoplasma hyopneumoniae), this protein is Elongation factor Ts.